The following is a 244-amino-acid chain: 3-deoxy-manno-octulosonate cytidylyltransferase (244 aa).

The protein belongs to the KdsB family.

It localises to the cytoplasm. It carries out the reaction 3-deoxy-alpha-D-manno-oct-2-ulosonate + CTP = CMP-3-deoxy-beta-D-manno-octulosonate + diphosphate. It participates in nucleotide-sugar biosynthesis; CMP-3-deoxy-D-manno-octulosonate biosynthesis; CMP-3-deoxy-D-manno-octulosonate from 3-deoxy-D-manno-octulosonate and CTP: step 1/1. It functions in the pathway bacterial outer membrane biogenesis; lipopolysaccharide biosynthesis. Its function is as follows. Activates KDO (a required 8-carbon sugar) for incorporation into bacterial lipopolysaccharide in Gram-negative bacteria. The polypeptide is 3-deoxy-manno-octulosonate cytidylyltransferase (Vesicomyosocius okutanii subsp. Calyptogena okutanii (strain HA)).